The sequence spans 303 residues: METAAQNGSSNQTGTARVKRGMAEMLKGGVIMDVVTPEQARIAEAAGAVAVMALERVPADIRAQGGVSRMSDPDMIEGIIDAVTIPVMAKARIGHFVEAQILQSLGVDYVDESEVLTPADYTNHIDKWKFTVPFVCGATNLGEALRRITEGAAMIRSKGEAGTGDVSNATTHMRKIGGEIRRLTSMSEDELYVAAKELQAPYELVVEVARAGKLPVTLFTAGGIATPADAAMMMQLGAEGVFVGSGIFKSGNPEQRAAAIVKATTFYDDPDVLAKVSRGLGEAMVGINVEEIAQPHRLAERGW.

Asp33 lines the D-ribose 5-phosphate pocket. Lys90 acts as the Schiff-base intermediate with D-ribose 5-phosphate in catalysis. Gly162 contacts D-ribose 5-phosphate. Arg174 lines the D-glyceraldehyde 3-phosphate pocket. D-ribose 5-phosphate-binding positions include Gly223 and 244–245; that span reads GS.

This sequence belongs to the PdxS/SNZ family. In terms of assembly, in the presence of PdxT, forms a dodecamer of heterodimers.

The catalysed reaction is aldehydo-D-ribose 5-phosphate + D-glyceraldehyde 3-phosphate + L-glutamine = pyridoxal 5'-phosphate + L-glutamate + phosphate + 3 H2O + H(+). The protein operates within cofactor biosynthesis; pyridoxal 5'-phosphate biosynthesis. Functionally, catalyzes the formation of pyridoxal 5'-phosphate from ribose 5-phosphate (RBP), glyceraldehyde 3-phosphate (G3P) and ammonia. The ammonia is provided by the PdxT subunit. Can also use ribulose 5-phosphate and dihydroxyacetone phosphate as substrates, resulting from enzyme-catalyzed isomerization of RBP and G3P, respectively. The sequence is that of Pyridoxal 5'-phosphate synthase subunit PdxS from Mycolicibacterium smegmatis (strain ATCC 700084 / mc(2)155) (Mycobacterium smegmatis).